The following is an 87-amino-acid chain: Small ribosomal subunit protein bS21 (87 aa).

Basic and acidic residues predominate over residues 35 to 52; sequence HYEKPSEKKAREKAEAVR. Residues 35–87 form a disordered region; it reads HYEKPSEKKAREKAEAVRRARKLARKKLQREGLLPSKPKPAFGADRRPSAAAR. Residues 53–62 show a composition bias toward basic residues; that stretch reads RARKLARKKL. Basic and acidic residues predominate over residues 78–87; the sequence is ADRRPSAAAR.

The protein is Small ribosomal subunit protein bS21 of Rhodopseudomonas palustris (strain ATCC BAA-98 / CGA009).